Reading from the N-terminus, the 753-residue chain is Bifunctional terpene synthase FUP1 (753 aa).

Positions 1–329 (MGPLLYRSRH…CSACPRQNAW (329 aa)) are terpene cyclase. A Mg(2+)-binding site is contributed by D96. A DDXXD 1 motif is present at residues 96-100 (DDTGE). Positions 231 to 239 (NDYFSWERE) match the NSE/DTE motif. The interval 330-745 (KNDTLSNGQN…MLRLCLAKLS (416 aa)) is prenyltransferase. Isopentenyl diphosphate is bound by residues K461, R464, and H493. Residues D500 and D504 each coordinate Mg(2+). Positions 500–504 (DDLED) match the DDXXD 2 motif. Residue R509 participates in dimethylallyl diphosphate binding. R510 contacts isopentenyl diphosphate. Dimethylallyl diphosphate is bound by residues K587, T588, Q625, N632, K640, and K650.

The protein in the N-terminal section; belongs to the terpene synthase family. In the C-terminal section; belongs to the FPP/GGPP synthase family. In terms of assembly, hexamer. Requires Mg(2+) as cofactor.

It carries out the reaction isopentenyl diphosphate + (2E,6E)-farnesyl diphosphate = (2E,6E,10E)-geranylgeranyl diphosphate + diphosphate. It participates in secondary metabolite biosynthesis; terpenoid biosynthesis. Its function is as follows. Bifunctional terpene synthase; part of the gene cluster that mediates the biosynthesis of the mycotoxin fusaproliferin (FUP) that belongs to the class of bicyclic sesterterpenoids. The FUP biosynthetic pathway starts with the enzyme encoded by FUP1 that combines a C-terminal prenyltransferase domain responsible for the synthesis of geranylgeranyl diphosphate with the N-terminal terpene cyclase domain, to yield preterpestacin I. Preterpestacin I is then decorated by oxygenation steps that are catalyzed by two cytochrome P450 monooxygenases. First, FUP2 introduces a hydroxyl group at the C-24 position resulting in the formation of preterpestacin IIa, which can be further oxidized. The second P450 monooxygenase catalyzes the hydroxylation at C-16 and C-17 of preterpestacin IIa, producing preterpestacin III. Subsequently, the FAD-dependent oxidoreductase FUP4 catalyzes the oxidation of the hydroxy group at the C-16 position to a keto group, leading to the formation of (-)-terpestacin, which is the immediate precursor of FUP. The final step in the proposed biosynthetic pathway is the addition of an acetyl group at the C-24 position of terpestacin, which is catalyzed by the acetyltransferase FUP5. The sequence is that of Bifunctional terpene synthase FUP1 from Fusarium proliferatum (strain ET1) (Orchid endophyte fungus).